Consider the following 427-residue polypeptide: 3-phosphoshikimate 1-carboxyvinyltransferase (427 aa).

Residues lysine 20, serine 21, and arginine 25 each coordinate 3-phosphoshikimate. Lysine 20 is a binding site for phosphoenolpyruvate. Phosphoenolpyruvate is bound by residues glycine 92 and arginine 120. 4 residues coordinate 3-phosphoshikimate: serine 166, glutamine 168, aspartate 312, and lysine 339. Residue glutamine 168 coordinates phosphoenolpyruvate. Catalysis depends on aspartate 312, which acts as the Proton acceptor. Phosphoenolpyruvate contacts are provided by arginine 343 and arginine 385.

The protein belongs to the EPSP synthase family. As to quaternary structure, monomer.

Its subcellular location is the cytoplasm. It catalyses the reaction 3-phosphoshikimate + phosphoenolpyruvate = 5-O-(1-carboxyvinyl)-3-phosphoshikimate + phosphate. The protein operates within metabolic intermediate biosynthesis; chorismate biosynthesis; chorismate from D-erythrose 4-phosphate and phosphoenolpyruvate: step 6/7. Its function is as follows. Catalyzes the transfer of the enolpyruvyl moiety of phosphoenolpyruvate (PEP) to the 5-hydroxyl of shikimate-3-phosphate (S3P) to produce enolpyruvyl shikimate-3-phosphate and inorganic phosphate. The protein is 3-phosphoshikimate 1-carboxyvinyltransferase of Streptococcus pneumoniae serotype 19F (strain G54).